The sequence spans 339 residues: Probable N5-carboxyaminoimidazole ribonucleotide mutase (339 aa).

Substrate is bound by residues Ser-11, Asp-14, and Arg-41.

Belongs to the AIR carboxylase family. Class I subfamily.

It carries out the reaction 5-carboxyamino-1-(5-phospho-D-ribosyl)imidazole + H(+) = 5-amino-1-(5-phospho-D-ribosyl)imidazole-4-carboxylate. Its pathway is purine metabolism; IMP biosynthesis via de novo pathway; 5-amino-1-(5-phospho-D-ribosyl)imidazole-4-carboxylate from 5-amino-1-(5-phospho-D-ribosyl)imidazole (N5-CAIR route): step 2/2. Catalyzes the conversion of N5-carboxyaminoimidazole ribonucleotide (N5-CAIR) to 4-carboxy-5-aminoimidazole ribonucleotide (CAIR). The polypeptide is Probable N5-carboxyaminoimidazole ribonucleotide mutase (Methanobrevibacter smithii).